We begin with the raw amino-acid sequence, 374 residues long: Eukaryotic translation initiation factor 3 subunit M (374 aa).

N-acetylserine is present on S2. A phosphoserine mark is found at S2 and S152. The PCI domain maps to 180 to 339 (AASKVMVELL…RKVVVSHSTH (160 aa)). K254 carries the N6-acetyllysine modification. S367 carries the post-translational modification Phosphoserine.

The protein belongs to the eIF-3 subunit M family. In terms of assembly, component of the eukaryotic translation initiation factor 3 (eIF-3) complex, which is composed of 13 subunits: EIF3A, EIF3B, EIF3C, EIF3D, EIF3E, EIF3F, EIF3G, EIF3H, EIF3I, EIF3J, EIF3K, EIF3L and EIF3M. The eIF-3 complex appears to include 3 stable modules: module A is composed of EIF3A, EIF3B, EIF3G and EIF3I; module B is composed of EIF3F, EIF3H, and EIF3M; and module C is composed of EIF3C, EIF3D, EIF3E, EIF3K and EIF3L. EIF3C of module C binds EIF3B of module A and EIF3H of module B, thereby linking the three modules. EIF3J is a labile subunit that binds to the eIF-3 complex via EIF3B. The eIF-3 complex interacts with RPS6KB1 under conditions of nutrient depletion. Mitogenic stimulation leads to binding and activation of a complex composed of MTOR and RPTOR, leading to phosphorylation and release of RPS6KB1 and binding of EIF4B to eIF-3.

The protein localises to the cytoplasm. Component of the eukaryotic translation initiation factor 3 (eIF-3) complex, which is required for several steps in the initiation of protein synthesis. The eIF-3 complex associates with the 40S ribosome and facilitates the recruitment of eIF-1, eIF-1A, eIF-2:GTP:methionyl-tRNAi and eIF-5 to form the 43S pre-initiation complex (43S PIC). The eIF-3 complex stimulates mRNA recruitment to the 43S PIC and scanning of the mRNA for AUG recognition. The eIF-3 complex is also required for disassembly and recycling of post-termination ribosomal complexes and subsequently prevents premature joining of the 40S and 60S ribosomal subunits prior to initiation. The eIF-3 complex specifically targets and initiates translation of a subset of mRNAs involved in cell proliferation, including cell cycling, differentiation and apoptosis, and uses different modes of RNA stem-loop binding to exert either translational activation or repression. The sequence is that of Eukaryotic translation initiation factor 3 subunit M from Pongo abelii (Sumatran orangutan).